The chain runs to 359 residues: Archaemetzincin-2 (359 aa).

Residue histidine 254 coordinates Zn(2+). The active-site Proton acceptor is glutamate 255. Histidine 258, histidine 264, cysteine 265, cysteine 270, cysteine 289, and cysteine 292 together coordinate Zn(2+).

Belongs to the peptidase M54 family. Zn(2+) serves as cofactor.

Probable zinc metalloprotease. This is Archaemetzincin-2 (Amz2) from Rattus norvegicus (Rat).